Consider the following 216-residue polypeptide: Somatotropin (216 aa).

The signal sequence occupies residues 1 to 25 (MAPGSWFSPLLIAVVTLGLPQEAAA). His-45 lines the Zn(2+) pocket. A disulfide bond links Cys-78 and Cys-189. Glu-198 is a Zn(2+) binding site. Cys-206 and Cys-214 are disulfide-bonded.

This sequence belongs to the somatotropin/prolactin family.

It localises to the secreted. Growth hormone plays an important role in growth control. This Gallus gallus (Chicken) protein is Somatotropin (GH).